Consider the following 655-residue polypeptide: Probable potassium transport system protein Kup (655 aa).

The next 12 membrane-spanning stretches (helical) occupy residues 19-39 (GLLI…LYVM), 42-62 (IAGG…CVFW), 102-122 (VWPA…TPPI), 132-152 (LIFN…VMLF), 161-181 (IVGK…ATLG), 214-234 (SGFW…ALYS), 246-266 (ISWI…GAWI), 282-302 (IMPE…AIIA), 338-358 (LFIP…VLWF), 370-390 (LAIN…LLII), 395-415 (FIWV…FLVA), and 420-440 (FFHG…IMII).

Belongs to the HAK/KUP transporter (TC 2.A.72) family.

The protein localises to the cell inner membrane. It catalyses the reaction K(+)(in) + H(+)(in) = K(+)(out) + H(+)(out). Functionally, transport of potassium into the cell. Likely operates as a K(+):H(+) symporter. In Cytophaga hutchinsonii (strain ATCC 33406 / DSM 1761 / CIP 103989 / NBRC 15051 / NCIMB 9469 / D465), this protein is Probable potassium transport system protein Kup.